Consider the following 545-residue polypeptide: Methionine--tRNA ligase (545 aa).

Positions 10–20 (PYANGSLHIGH) match the 'HIGH' region motif. C141, C144, C153, and C156 together coordinate Zn(2+). Residues 329–333 (KISTS) carry the 'KMSKS' region motif. T332 contributes to the ATP binding site.

The protein belongs to the class-I aminoacyl-tRNA synthetase family. MetG type 1 subfamily. Monomer. The cofactor is Zn(2+).

Its subcellular location is the cytoplasm. The enzyme catalyses tRNA(Met) + L-methionine + ATP = L-methionyl-tRNA(Met) + AMP + diphosphate. In terms of biological role, is required not only for elongation of protein synthesis but also for the initiation of all mRNA translation through initiator tRNA(fMet) aminoacylation. This Streptococcus pneumoniae (strain 70585) protein is Methionine--tRNA ligase.